The sequence spans 497 residues: RNA-splicing ligase RtcB homolog (497 aa).

Mn(2+)-binding residues include Asp111, Cys114, His219, His251, and His345. Residue Asn218 to Glu222 coordinates GMP. Residues His345–Asn346, Gly394–Met397, Ser401, His420–Gly423, and Lys496 each bind GMP. The GMP-histidine intermediate role is filled by His420.

Belongs to the RtcB family. In terms of assembly, catalytic component of the tRNA-splicing ligase complex. Requires Mn(2+) as cofactor.

It catalyses the reaction a 3'-end 3'-phospho-ribonucleotide-RNA + a 5'-end dephospho-ribonucleoside-RNA + GTP = a ribonucleotidyl-ribonucleotide-RNA + GMP + diphosphate. It carries out the reaction a 3'-end 2',3'-cyclophospho-ribonucleotide-RNA + a 5'-end dephospho-ribonucleoside-RNA + GTP + H2O = a ribonucleotidyl-ribonucleotide-RNA + GMP + diphosphate + H(+). Functionally, catalytic subunit of the tRNA-splicing ligase complex that acts by directly joining spliced tRNA halves to mature-sized tRNAs by incorporating the precursor-derived splice junction phosphate into the mature tRNA as a canonical 3',5'-phosphodiester. May act as an RNA ligase with broad substrate specificity, and may function toward other RNAs. In Monosiga brevicollis (Choanoflagellate), this protein is RNA-splicing ligase RtcB homolog.